The sequence spans 1049 residues: MSTWSSMLADLKKRAEEAKRQVKKGYDVTKNGLQYGVSQAKLQALAAGKAVQKYGNKLVLVIPKEYDGSVGNGFFDLVKAAEELGIQVKYVNRNELEVAHKSLGTADQFLGLTERGLTLFAPQLDQFLQKHSKISNVVGSSTGDAVSKLAKSQTIISGIQSVLGTVLAGINLNEAIISGGSELELAEAGVSLASELVSNIAKGTTTIDAFTTQIQNFGKLAENAKGLGGVGRQLQNISGSALSKTGLGLDIISSLLSGVTRSFALRNKNASTSTKVAAGFELSNQVIGGITKAVSSYILAQRLRAGLSTTGPAAALIASSISLAISPLAFLRVADNFNRSKEIGEFAERFKKLGYDGDKLLSEFYHEAGTIDASITTISTALSAIAAGTAAASAGALVGAPITLLVTGITGLISGILEFSKQPMLDHVASKIGNKIDEWEKKYGKNYFENGYDARHKAFLEDSFSLLSSFNKQYETERAVLITQQRWDEYIGELAGITGKGDKLSSGKAYVDYFQEGKLLEKKPDDFSKVVFDPTKGEIDISNSQTSTLLKFVTPLLTPGTESRERTQTGKYEYITKLVVKGKDKWVVNGVKDKGAVYDYTNLIQHAHISSSVARGEEYREVRLVSHLGNGNDKVFLAAGSAEIHAGEGHDVVYYDKTDTGLLVIDGTKATEQGRYSVTRELSGATKILREVIKNQKYAVGKREETLEYRDYELTQSGNSNLKAHDELHSVEEIGSNQRDEFKGSKFRDIFHGADGDDLLNGNDGDDILYGDKGNDELRGDNGNDQLYGGEGDDKLLGGNGNNYLSGGDGNDELQVLGNGFNVLRGGKGDDKLYGSSGSDLLDGGEGNDYLEGGDGSDFYVYRSTSGNHTIYDQGKASDSDKLYLSDLSFDNILVKRVNDNLEFRSNNNSNSGVLTIKDWFKGGNSYNHKIEQIVDKNGRKLTAGNLGNNFHDTQQASSLLKNVTQEQNESNLSSLKTELGKIITNAGNFGVAKQGNTGINTAALNNEVNKIISSANTFATSQLGGSGMGTLPSTNVNSMMLGNLARAA.

The next 3 helical transmembrane spans lie at 154–170, 315–331, and 397–413; these read TIIS…LAGI, ALIA…LAFL, and LVGA…TGLI. 6 Hemolysin-type calcium-binding repeats span residues 743–760, 761–778, 779–796, 797–814, 825–842, and 843–860; these read KGSK…DDLL, NGND…NDEL, RGDN…DDKL, LGGN…NDEL, RGGK…SDLL, and DGGE…SDFY.

It belongs to the RTX prokaryotic toxin (TC 1.C.11) family. In terms of processing, palmitoylated by ApxIIIC. The toxin only becomes active when modified.

Its subcellular location is the secreted. The protein resides in the host cell membrane. Does not have hemolytic activity but shows a strong cytotoxicity towards alveolar macrophages and neutrophils. The chain is RTX-III toxin determinant A from serotype 2 (apxIIIA) from Actinobacillus pleuropneumoniae (Haemophilus pleuropneumoniae).